Here is a 415-residue protein sequence, read N- to C-terminus: MKLKSLLLRYYPPGIMLEYEKHGELKTKSIDLLDLGPSTDVSALVEEIQKAEPLLTASRTEQVKLLIQRLQEKLGQNSNHTFYLFKVLKAHILPLTNVALNKSGSCFITGSYDRTCKLWDTASGEELNTLEGHRNVVYAIAFNNPYGDKIATGSFDKTCKLWSVETGKCYHTFRGHTAEIVCLSFNPQSTLVATGSMDTTAKLWDIQNGEEVYTLRGHSAEIISLSFNTSGDRIITGSFDHTVVVWDADTGRKVNILIGHCAEISSASFNWDCSLILTGSMDKTCKLWDATNGKCVATLTGHDDEILDSCFDYTGKLIATASADGTARIFSAATRKCIAKLEGHEGEISKISFNPQGNHLLTGSSDKTARIWDAQTGQCLQVLEGHTDEIFSCAFNYKGNIVITGSKDNTCRIWR.

WD repeat units lie at residues 90 to 129 (AHILPLTNVALNKSGSCFITGSYDRTCKLWDTASGEELNT), 132 to 174 (GHRN…HTFR), 175 to 214 (GHTAEIVCLSFNPQSTLVATGSMDTTAKLWDIQNGEEVYT), 217 to 256 (GHSAEIISLSFNTSGDRIITGSFDHTVVVWDADTGRKVNI), 259 to 298 (GHCAEISSASFNWDCSLILTGSMDKTCKLWDATNGKCVAT), 301 to 340 (GHDDEILDSCFDYTGKLIATASADGTARIFSAATRKCIAK), 343 to 384 (GHEG…QVLE), and 386 to 415 (HTDEIFSCAFNYKGNIVITGSKDNTCRIWR).

Belongs to the WD repeat WDR69 family. In terms of assembly, interacts with IFT46.

It is found in the cytoplasm. Its subcellular location is the cytoskeleton. The protein resides in the flagellum basal body. The protein localises to the flagellum axoneme. Its function is as follows. Required for axonemal dynein assembly and ciliary motility in ciliated organs, including Kupffer's vesicle, during embryogenesis. Facilitates the onset of robust cilia motility during development. In Homo sapiens (Human), this protein is Dynein assembly factor with WD repeat domains 1.